Reading from the N-terminus, the 147-residue chain is Protein YjdN (147 aa).

This Escherichia coli (strain K12) protein is Protein YjdN (yjdN).